A 367-amino-acid chain; its full sequence is Putative F-box/kelch-repeat protein At4g39600 (367 aa).

The F-box domain maps to 11–57 (ATSNPSLPEDLVVSCLARVSRLYYPTLSLVSKSFRSLIASPDLYKTR). 2 Kelch repeats span residues 127 to 171 (HLYA…LDGK) and 172 to 216 (MYLA…EGKI).

This is Putative F-box/kelch-repeat protein At4g39600 from Arabidopsis thaliana (Mouse-ear cress).